Reading from the N-terminus, the 410-residue chain is Acetyltransferase aurG (410 aa).

3 consecutive transmembrane segments (helical) span residues 3–23 (LWLV…VVCF), 28–48 (SLVR…GLIL), and 59–79 (WSLV…VGLI). Residues 90-99 (TSSRGGQPNA) show a composition bias toward polar residues. A disordered region spans residues 90 to 112 (TSSRGGQPNASLDLAGRKKPPSS). Residue N98 is glycosylated (N-linked (GlcNAc...) asparagine). Helical transmembrane passes span 157–177 (AMTL…GGDL), 219–239 (MYFS…MVGL), 300–320 (ILAT…YSYG), and 364–384 (IGYV…FFPL).

Belongs to the wax synthase family.

Its subcellular location is the membrane. It participates in polyketide biosynthesis. In terms of biological role, acetyltransferase; part of the gene cluster that mediates the biosynthesis of aurovertins, fungal polyketides that exhibit potent inhibition of adenosine triphosphate synthase. Tha biosynthesis starts with the HR-PKS aurA that selects propionate as the starter unit; synthesizes a hexa-ene chain through the repeated functions of the KR and DH domains in the first six iterations; selectively introduces three alpha-methyl substitutions at C4, C6, and C16 using the S-adensylmethionine-dependent cMET; and shuts off KR and DH in the last three iterations to afford a 1,3,5-triketo portion that can undergo intramolecular cyclization to yield the alpha-pyrone intermediate. AurE may act as a cyclase and enhances the rate of pyrone formation and product release of aurA. The methyltransferase aurB then methylates the C17 hydroxyl group. C17 methylation is required to initiate epoxidation by the downstream monooxygenase aurC. The monooxygenase aurC and the epoxide hydrolase aurD can iteratively transform the terminal triene portion of the methylated precursor into the dioxabicyclo[3.2.1]octane scaffold of aurovertin E. Epoxidation modifications of the precursor occur in two separate steps; bis-epoxidation of the two terminal olefins takes place first, followed by another epoxidation that occurs at C7-C8 after tetrahydrofuran formation. The O-acyltransferase aurG converts aurovertin E to aurovertin A. This chain is Acetyltransferase aurG, found in Calcarisporium arbuscula (Dendryphion arbuscula).